Here is a 292-residue protein sequence, read N- to C-terminus: Acetyl-coenzyme A carboxylase carboxyl transferase subunit beta (292 aa).

The CoA carboxyltransferase N-terminal domain maps to 29–292 (LWVKCSECGQ…HGVKELVQTN (264 aa)). Zn(2+)-binding residues include C33, C36, C52, and C55. The C4-type zinc finger occupies 33–55 (CSECGQVAYRKDLISNFNVCSNC).

This sequence belongs to the AccD/PCCB family. As to quaternary structure, acetyl-CoA carboxylase is a heterohexamer composed of biotin carboxyl carrier protein (AccB), biotin carboxylase (AccC) and two subunits each of ACCase subunit alpha (AccA) and ACCase subunit beta (AccD). It depends on Zn(2+) as a cofactor.

The protein resides in the cytoplasm. The enzyme catalyses N(6)-carboxybiotinyl-L-lysyl-[protein] + acetyl-CoA = N(6)-biotinyl-L-lysyl-[protein] + malonyl-CoA. The protein operates within lipid metabolism; malonyl-CoA biosynthesis; malonyl-CoA from acetyl-CoA: step 1/1. Its function is as follows. Component of the acetyl coenzyme A carboxylase (ACC) complex. Biotin carboxylase (BC) catalyzes the carboxylation of biotin on its carrier protein (BCCP) and then the CO(2) group is transferred by the transcarboxylase to acetyl-CoA to form malonyl-CoA. The chain is Acetyl-coenzyme A carboxylase carboxyl transferase subunit beta from Prochlorococcus marinus subsp. pastoris (strain CCMP1986 / NIES-2087 / MED4).